Here is a 71-residue protein sequence, read N- to C-terminus: Translation initiation factor IF-1 (71 aa).

The S1-like domain occupies 1-71 (MSKDDLIQFT…LTKGRVIHRH (71 aa)).

This sequence belongs to the IF-1 family. As to quaternary structure, component of the 30S ribosomal translation pre-initiation complex which assembles on the 30S ribosome in the order IF-2 and IF-3, IF-1 and N-formylmethionyl-tRNA(fMet); mRNA recruitment can occur at any time during PIC assembly.

It localises to the cytoplasm. Functionally, one of the essential components for the initiation of protein synthesis. Stabilizes the binding of IF-2 and IF-3 on the 30S subunit to which N-formylmethionyl-tRNA(fMet) subsequently binds. Helps modulate mRNA selection, yielding the 30S pre-initiation complex (PIC). Upon addition of the 50S ribosomal subunit IF-1, IF-2 and IF-3 are released leaving the mature 70S translation initiation complex. The chain is Translation initiation factor IF-1 from Rickettsia prowazekii (strain Madrid E).